We begin with the raw amino-acid sequence, 322 residues long: Follistatin-A (322 aa).

The N-terminal stretch at 1–32 is a signal peptide; it reads MLRMLKRQQLHPGMILLLFWLCYLIEDQKVQA. In terms of domain architecture, TB spans 33 to 106; that stretch reads GNCWLQQGKN…TCDNVDCGPG (74 aa). 8 disulfides stabilise this stretch: Cys-35-Cys-58, Cys-45-Cys-91, Cys-59-Cys-94, Cys-98-Cys-109, Cys-103-Cys-119, Cys-121-Cys-153, Cys-125-Cys-146, and Cys-135-Cys-167. Residue Asn-75 is glycosylated (N-linked (GlcNAc...) asparagine). The 24-residue stretch at 97-120 folds into the Follistatin-like 1 domain; sequence TCDNVDCGPGKRCKMNRRSKPRCV. Kazal-like domains follow at residues 103–169, 189–244, and 267–321; these read CGPG…KCKK, NAYC…KCIK, and RGRC…SCNC. An N-linked (GlcNAc...) asparagine glycan is attached at Asn-127. In terms of domain architecture, Follistatin-like 2 spans 170 to 193; the sequence is TCRDVLCPGSSTCVVDQTNNAYCV. 3 disulfides stabilise this stretch: Cys-195-Cys-228, Cys-199-Cys-221, and Cys-210-Cys-242. Residues 247-271 enclose the Follistatin-like 3 domain; that stretch reads SCDDIHCSAGKKCLWDAKMSRGRCA. Cystine bridges form between Cys-273-Cys-305, Cys-277-Cys-298, and Cys-287-Cys-319. Asn-291 is a glycosylation site (N-linked (GlcNAc...) asparagine).

As to quaternary structure, monomer. As to expression, not expressed in the organizer region. Expression in gastrulating embryos is confined to anterior and paraxial regions, which give rise to head mesoderm and the first five somites. In addition, expressed transiently in a subset of cells in the posterior notochord anlage. Later, expression is seen in brain, eyes and somites.

Binds directly to activin and functions as an activin antagonist. Specific inhibitor of the biosynthesis and secretion of pituitary follicle stimulating hormone (fsh). Inhibits bmp-signaling during later stages of development including late phases of dorsoventral patterning, to refine the early pattern set up by the interaction of chordino and bmp2/4. Not involved in organizer function or early phases of dorsoventral pattern formation. This chain is Follistatin-A (fsta), found in Danio rerio (Zebrafish).